Reading from the N-terminus, the 33-residue chain is Defensin-1 (33 aa).

3 disulfides stabilise this stretch: cysteine 4–cysteine 32, cysteine 6–cysteine 21, and cysteine 11–cysteine 31.

It belongs to the alpha-defensin family.

The protein localises to the secreted. Its function is as follows. Has antibacterial activity against the Gram-negative bacterium E.coli and the Gram-positive bacteria L.monocytogenes and S.aureus. Has antifungal activity against C.albicans. The protein is Defensin-1 of Papio hamadryas (Hamadryas baboon).